Consider the following 507-residue polypeptide: ATP synthase subunit alpha, chloroplastic (507 aa).

170 to 177 (GDRQTGKT) serves as a coordination point for ATP.

This sequence belongs to the ATPase alpha/beta chains family. In terms of assembly, F-type ATPases have 2 components, CF(1) - the catalytic core - and CF(0) - the membrane proton channel. CF(1) has five subunits: alpha(3), beta(3), gamma(1), delta(1), epsilon(1). CF(0) has four main subunits: a, b, b' and c.

It localises to the plastid. Its subcellular location is the chloroplast thylakoid membrane. The catalysed reaction is ATP + H2O + 4 H(+)(in) = ADP + phosphate + 5 H(+)(out). In terms of biological role, produces ATP from ADP in the presence of a proton gradient across the membrane. The alpha chain is a regulatory subunit. The sequence is that of ATP synthase subunit alpha, chloroplastic from Lemna minor (Common duckweed).